Consider the following 165-residue polypeptide: Chorismate pyruvate-lyase (165 aa).

Substrate is bound by residues Met-35, Arg-77, Leu-115, and Glu-156.

This sequence belongs to the UbiC family. As to quaternary structure, monomer.

Its subcellular location is the cytoplasm. It catalyses the reaction chorismate = 4-hydroxybenzoate + pyruvate. It participates in cofactor biosynthesis; ubiquinone biosynthesis. Removes the pyruvyl group from chorismate, with concomitant aromatization of the ring, to provide 4-hydroxybenzoate (4HB) for the ubiquinone pathway. This chain is Chorismate pyruvate-lyase, found in Salmonella gallinarum (strain 287/91 / NCTC 13346).